Here is a 1013-residue protein sequence, read N- to C-terminus: Tolloid-like protein 1 (1013 aa).

A signal peptide spans 1-30; sequence MGLQALSPRMLLWLVVSGIVFSRVLWVCAG. The propeptide occupies 31-147; the sequence is LDYDYTFDGN…EQSEKNRVPR (117 aa). The segment at 124–150 is disordered; sequence QNNTMKGKAPPKLSEQSEKNRVPRAAT. The region spanning 148–347 is the Peptidase M12A domain; it reads AATSRTERIW…AQARKLYRCP (200 aa). A glycan (N-linked (GlcNAc...) asparagine) is linked at Asn-169. Cystine bridges form between Cys-190/Cys-346, Cys-210/Cys-232, Cys-212/Cys-213, and Cys-349/Cys-375. His-240 provides a ligand contact to Zn(2+). The active site involves Glu-241. His-244 and His-250 together coordinate Zn(2+). CUB domains are found at residues 349–461 and 462–574; these read CGET…YEAI and CGGE…FFKE. N-linked (GlcNAc...) asparagine glycans are attached at residues Asn-359 and Asn-390. Cystine bridges form between Cys-402-Cys-424, Cys-462-Cys-488, Cys-515-Cys-537, Cys-578-Cys-590, Cys-586-Cys-599, Cys-601-Cys-614, Cys-618-Cys-644, Cys-671-Cys-693, Cys-734-Cys-745, Cys-741-Cys-754, Cys-756-Cys-769, Cys-774-Cys-800, Cys-827-Cys-849, Cys-887-Cys-917, and Cys-944-Cys-966. The EGF-like 1; calcium-binding domain occupies 574 to 615; it reads EEDECAKPDRGGCEQRCLNTLGSYQCACEPGYELGPDRRSCE. A CUB 3 domain is found at 618-730; sequence CGGLLTKLNG…KGFKAHFFSD (113 aa). N-linked (GlcNAc...) asparagine glycosylation occurs at Asn-626. The EGF-like 2; calcium-binding domain occupies 730-770; it reads DKDECSKDNGGCQHECVNTMGSYTCQCRNGFVLHENKHDCK. 2 consecutive CUB domains span residues 774-886 and 887-1003; these read CEQK…HSTE and CGGR…YKSI.

Zn(2+) serves as cofactor. In terms of tissue distribution, highly expressed in brain and kidney and weakly in lung, skeletal muscle. A perceptible level of expression is observed in heart and testis.

The protein localises to the secreted. Functionally, protease which processes procollagen C-propeptides, such as chordin, pro-biglycan and pro-lysyl oxidase. Required for the embryonic development, especially heart development. Predominant protease, which in the development, influences dorsal-ventral patterning and skeletogenesis. The protein is Tolloid-like protein 1 (Tll1) of Mus musculus (Mouse).